Consider the following 424-residue polypeptide: Carbohydrate sulfotransferase 8 (424 aa).

Over 1-10 (MTLRPGTMRL) the chain is Cytoplasmic. The helical; Signal-anchor for type II membrane protein transmembrane segment at 11–31 (ACMFSSILLFGAAGLLLFISL) threads the bilayer. At 32 to 424 (QDPTELAPQQ…NYSKPFADLY (393 aa)) the chain is on the lumenal side. The tract at residues 47 to 107 (FNIRPRQPHH…PLQRGTRLRL (61 aa)) is disordered. Positions 66-77 (GDLKEPTERVTR) are enriched in basic and acidic residues. Asn128 is a glycosylation site (N-linked (GlcNAc...) asparagine). Residues 198–204 (PKAGCSN) and 258–266 (REPFERLVS) contribute to the 3'-phosphoadenylyl sulfate site. N-linked (GlcNAc...) asparagine glycosylation is found at Asn294, Asn367, and Asn415.

Belongs to the sulfotransferase 2 family. Predominantly expressed in pituitary gland. In brain, it is expressed in pituitary gland, cerebellum, medulla oblongata, pons, thalamus and spinal cord. Expressed in the epidermis. Expressed at lower level in lung, spleen, adrenal gland, placenta, prostate, testis, mammary gland and trachea.

The protein resides in the golgi apparatus membrane. Catalyzes the transfer of sulfate to position 4 of non-reducing N-acetylgalactosamine (GalNAc) residues in both N-glycans and O-glycans. Required for biosynthesis of glycoprotein hormones lutropin and thyrotropin, by mediating sulfation of their carbohydrate structures. Only active against terminal GalNAcbeta1,GalNAcbeta. Not active toward chondroitin. The sequence is that of Carbohydrate sulfotransferase 8 (CHST8) from Homo sapiens (Human).